Here is a 215-residue protein sequence, read N- to C-terminus: 7-cyano-7-deazaguanine synthase (215 aa).

Residue 8 to 18 (LSAGLDSTVSL) participates in ATP binding. 4 residues coordinate Zn(2+): C191, C199, C202, and C205.

This sequence belongs to the QueC family. In terms of assembly, homodimer. Zn(2+) is required as a cofactor.

The catalysed reaction is 7-carboxy-7-deazaguanine + NH4(+) + ATP = 7-cyano-7-deazaguanine + ADP + phosphate + H2O + H(+). Its pathway is purine metabolism; 7-cyano-7-deazaguanine biosynthesis. Its function is as follows. Catalyzes the ATP-dependent conversion of 7-carboxy-7-deazaguanine (CDG) to 7-cyano-7-deazaguanine (preQ(0)). The polypeptide is 7-cyano-7-deazaguanine synthase (Carboxydothermus hydrogenoformans (strain ATCC BAA-161 / DSM 6008 / Z-2901)).